We begin with the raw amino-acid sequence, 482 residues long: ATP synthase subunit beta (482 aa).

161 to 168 (GGAGVGKT) is a binding site for ATP.

This sequence belongs to the ATPase alpha/beta chains family. As to quaternary structure, F-type ATPases have 2 components, CF(1) - the catalytic core - and CF(0) - the membrane proton channel. CF(1) has five subunits: alpha(3), beta(3), gamma(1), delta(1), epsilon(1). CF(0) has three main subunits: a(1), b(2) and c(9-12). The alpha and beta chains form an alternating ring which encloses part of the gamma chain. CF(1) is attached to CF(0) by a central stalk formed by the gamma and epsilon chains, while a peripheral stalk is formed by the delta and b chains.

Its subcellular location is the cell inner membrane. The catalysed reaction is ATP + H2O + 4 H(+)(in) = ADP + phosphate + 5 H(+)(out). Produces ATP from ADP in the presence of a proton gradient across the membrane. The catalytic sites are hosted primarily by the beta subunits. This chain is ATP synthase subunit beta, found in Solibacter usitatus (strain Ellin6076).